Consider the following 503-residue polypeptide: Anhydrotetracycline monooxygenase (503 aa).

It belongs to the PheA/TfdB FAD monooxygenase family. The cofactor is FAD.

The catalysed reaction is anhydrotetracycline + NADPH + O2 + H(+) = 5a,11a-dehydrotetracycline + NADP(+) + H2O. The protein operates within antibiotic biosynthesis; oxytetracycline biosynthesis. Its function is as follows. Catalyzes hydroxylation of the anthracycline structure at position C-6 during the biosynthesis of oxytetracyline. The sequence is that of Anhydrotetracycline monooxygenase from Streptomyces rimosus.